Here is a 648-residue protein sequence, read N- to C-terminus: Siderophore transporter MYCGRDRAFT_70577 (648 aa).

Basic and acidic residues-rich tracts occupy residues 1–11 (MRTSSESHSRS) and 29–46 (SASKDHHDHDHHHKDTSI). The disordered stretch occupies residues 1–58 (MRTSSESHSRSDAFNGKNDASQVTVDSDSASKDHHDHDHHHKDTSINERQSQHVHQQA). A compositionally biased stretch (polar residues) spans 47–58 (NERQSQHVHQQA). The next 11 membrane-spanning stretches (helical) occupy residues 79-99 (LLLYVLVASLALTMFAYALDQ), 151-171 (VVVLVVYAVGFAVAASSQGLA), 205-225 (AFWSGMLATPFLITTFINGFI), 236-256 (WGLGMFAIMMPVLLTPAIWTL), 303-323 (LIGLLLLGLAFSLILLALNLA), 336-356 (IAMLVIGFVILGLFIAYEALL), 409-429 (TIFIGTTTLTLCTMSPIGGLI), 438-458 (TLMVIGAIIKLIGYGVGLDGN), 468-488 (LAVSQVMLGMGAWTVIGARVG), 500-520 (VVISVMSLWSTMASSIGSTIA), and 578-598 (GIILAVSLVLAAVPVVFSCLM).

Belongs to the major facilitator superfamily.

Its subcellular location is the cell membrane. Functionally, siderophore transporter; part of the gene cluster 14 that mediates the biosynthesis of a ferrichrome A-like siderophors which may contribute to organismal virulence. This chain is Siderophore transporter MYCGRDRAFT_70577, found in Zymoseptoria tritici (strain CBS 115943 / IPO323) (Speckled leaf blotch fungus).